The primary structure comprises 357 residues: 5-hydroxytryptamine receptor 5A (357 aa).

Residues 1–36 are Extracellular-facing; the sequence is MDLPVNLTSFSLSTPSPLETNHSLGKDDLRPSSPLL. Residues Asn6 and Asn21 are each glycosylated (N-linked (GlcNAc...) asparagine). The helical transmembrane segment at 37-63 threads the bilayer; the sequence is SVFGVLILTLLGFLVAATFAWNLLVLA. Residues 64–76 are Cytoplasmic-facing; it reads TILRVRTFHRVPH. The helical transmembrane segment at 77–103 threads the bilayer; it reads NLVASMAVSDVLVAALVMPLSLVHELS. Residues 104–114 lie on the Extracellular side of the membrane; that stretch reads GRRWQLGRRLC. Residues Cys114 and Cys192 are joined by a disulfide bond. A helical transmembrane segment spans residues 115–137; it reads QLWIACDVLCCTASIWNVTAIAL. Asp121 provides a ligand contact to serotonin. The Cytoplasmic segment spans residues 138–155; it reads DRYWSITRHMEYTLRTRK. Residues 156–176 form a helical membrane-spanning segment; the sequence is CVSNVMIALTWALSAVISLAP. The Extracellular portion of the chain corresponds to 177-198; the sequence is LLFGWGETYSEGSEECQVSREP. The helical transmembrane segment at 199–220 threads the bilayer; sequence SYAVFSTVGAFYLPLCVVLFVY. The Cytoplasmic segment spans residues 221–287; sequence WKIYKAAKFR…QKEQRAALMV (67 aa). Residues 288-312 traverse the membrane as a helical segment; that stretch reads GILIGVFVLCWIPFFLTELISPLCS. The Extracellular portion of the chain corresponds to 313-314; sequence CD. The chain crosses the membrane as a helical span at residues 315–339; sequence IPAIWKSIFLWLGYSNSFFNPLIYT. The Cytoplasmic segment spans residues 340-357; the sequence is AFNKNYNSAFKNFFSRQH.

The protein belongs to the G-protein coupled receptor 1 family.

The protein localises to the cell membrane. Its function is as follows. G-protein coupled receptor for 5-hydroxytryptamine (serotonin), a biogenic hormone that functions as a neurotransmitter, a hormone and a mitogen. Also functions as a receptor for ergot alkaloid derivatives and other psychoactive substances. Ligand binding causes a conformation change that triggers signaling via guanine nucleotide-binding proteins (G proteins) and modulates the activity of downstream effectors. HTR5A is coupled to G(i)/G(o) G alpha proteins and mediates inhibitory neurotransmission: signaling inhibits adenylate cyclase activity and activates a phosphatidylinositol-calcium second messenger system that regulates the release of Ca(2+) ions from intracellular stores. This is 5-hydroxytryptamine receptor 5A from Homo sapiens (Human).